Here is a 633-residue protein sequence, read N- to C-terminus: Glutathione S-transferase C-terminal domain-containing protein (633 aa).

The GST C-terminal domain maps to leucine 130–alanine 332. The disordered stretch occupies residues asparagine 191 to serine 233. Over residues glutamine 224–serine 233 the composition is skewed to polar residues. Serine 233 carries the post-translational modification Phosphoserine.

Belongs to the GSTCD family. Widely expressed in cell types relevant to airway function, including airway smooth muscle cells and epithelial cells.

It is found in the cytoplasm. This is Glutathione S-transferase C-terminal domain-containing protein (GSTCD) from Homo sapiens (Human).